The primary structure comprises 151 residues: UPF0178 protein ESA_02916 (151 aa).

It belongs to the UPF0178 family.

This is UPF0178 protein ESA_02916 from Cronobacter sakazakii (strain ATCC BAA-894) (Enterobacter sakazakii).